The chain runs to 186 residues: Peptidyl-tRNA hydrolase (186 aa).

Position 14 (Y14) interacts with tRNA. The Proton acceptor role is filled by H19. TRNA contacts are provided by F64, N66, and N112.

It belongs to the PTH family. Monomer.

The protein resides in the cytoplasm. It carries out the reaction an N-acyl-L-alpha-aminoacyl-tRNA + H2O = an N-acyl-L-amino acid + a tRNA + H(+). Functionally, hydrolyzes ribosome-free peptidyl-tRNAs (with 1 or more amino acids incorporated), which drop off the ribosome during protein synthesis, or as a result of ribosome stalling. In terms of biological role, catalyzes the release of premature peptidyl moieties from peptidyl-tRNA molecules trapped in stalled 50S ribosomal subunits, and thus maintains levels of free tRNAs and 50S ribosomes. The polypeptide is Peptidyl-tRNA hydrolase (Listeria monocytogenes serotype 4a (strain HCC23)).